The primary structure comprises 276 residues: NADPH-dependent 7-cyano-7-deazaguanine reductase (276 aa).

83 to 85 contributes to the substrate binding site; the sequence is IES. 85-86 serves as a coordination point for NADPH; the sequence is SK. Cysteine 184 functions as the Thioimide intermediate in the catalytic mechanism. The active-site Proton donor is the aspartate 191. 223–224 is a binding site for substrate; it reads HE. 252–253 provides a ligand contact to NADPH; the sequence is RG.

The protein belongs to the GTP cyclohydrolase I family. QueF type 2 subfamily. In terms of assembly, homodimer.

Its subcellular location is the cytoplasm. The catalysed reaction is 7-aminomethyl-7-carbaguanine + 2 NADP(+) = 7-cyano-7-deazaguanine + 2 NADPH + 3 H(+). The protein operates within tRNA modification; tRNA-queuosine biosynthesis. Functionally, catalyzes the NADPH-dependent reduction of 7-cyano-7-deazaguanine (preQ0) to 7-aminomethyl-7-deazaguanine (preQ1). The protein is NADPH-dependent 7-cyano-7-deazaguanine reductase of Pseudomonas putida (strain ATCC 47054 / DSM 6125 / CFBP 8728 / NCIMB 11950 / KT2440).